Consider the following 400-residue polypeptide: MAKAKYERTKPHVNIGTIGHVDHGKTTLTAAITVVLSTSGGASVKRYDEIDNAPEERERGITINTAHVEYETANRHYAHVDCPGHADYVKNMITGAAQMDGAILVVSAADGPMPQTREHILLSRQVGVPYIVVFLNKSDMVDDEELLELVDMEVRELLNSYEFPGDDTPIVAGSGLKALECGCGKRECEWCGKIWELMDNVDAYIPTPERAVDKPFLMPVEDVFSITGRGTVATGRVERGQVKVQDEVEIVGLNEKPRKTVVTGVEMFRKLLDFAQAGDNIGALLRGVDRKEIERGQVLAKPGSINPHTKYSAEVYVLTKEEGGRHTPFFNGYRPQFYFRTTDVTGIVQLPEGVEMVMPGDNIKVDVDLITPIAIEEGLRFAIREGGRTVGAGVVTGIRE.

Residues 10 to 209 form the tr-type G domain; it reads KPHVNIGTIG…NVDAYIPTPE (200 aa). The segment at 19-26 is G1; that stretch reads GHVDHGKT. 19-26 contributes to the GTP binding site; sequence GHVDHGKT. Thr-26 serves as a coordination point for Mg(2+). Residues 60-64 form a G2 region; it reads GITIN. Positions 81 to 84 are G3; the sequence is DCPG. Residues 81–85 and 136–139 each bind GTP; these read DCPGH and NKSD. Residues 136–139 are G4; the sequence is NKSD. A G5 region spans residues 174 to 176; it reads SGL.

The protein belongs to the TRAFAC class translation factor GTPase superfamily. Classic translation factor GTPase family. EF-Tu/EF-1A subfamily. As to quaternary structure, monomer.

It is found in the cytoplasm. The catalysed reaction is GTP + H2O = GDP + phosphate + H(+). Its function is as follows. GTP hydrolase that promotes the GTP-dependent binding of aminoacyl-tRNA to the A-site of ribosomes during protein biosynthesis. The protein is Elongation factor Tu of Desulforamulus reducens (strain ATCC BAA-1160 / DSM 100696 / MI-1) (Desulfotomaculum reducens).